The chain runs to 443 residues: Endothelin receptor type B (443 aa).

The signal sequence occupies residues 1-26; the sequence is MQPLRSLCGRALVALIFACGVAGVQS. Residues 27-102 lie on the Extracellular side of the membrane; the sequence is EERGFPPAGA…GPIEIKDTFK (76 aa). Positions 53-89 are disordered; it reads TFWPRGSNASLPRSSSPPQMPKGGRMAGPPARTLTPP. The span at 59–69 shows a compositional bias: polar residues; sequence SNASLPRSSSP. An N-linked (GlcNAc...) asparagine glycan is attached at Asn-60. A helical transmembrane segment spans residues 103–127; the sequence is YINTVVSCLVFVLGIIGNSTLLRII. At 128-138 the chain is on the cytoplasmic side; that stretch reads YKNKCMRNGPN. Residues 139–164 traverse the membrane as a helical segment; it reads ILIASLALGDLLHIIIDIPINVYKLL. Residues 165-176 are Extracellular-facing; the sequence is AEDWPFGVEMCK. Cys-175 and Cys-256 form a disulfide bridge. The helical transmembrane segment at 177 to 198 threads the bilayer; the sequence is LVPFIQKASVGITVLSLCALSI. Residues 199-219 are Cytoplasmic-facing; sequence DRYRAVASWSRIKGIGVPKWT. A helical transmembrane segment spans residues 220–244; the sequence is AVEIVLIWVVSVVLAVPEALGFDMI. Residues 245 to 272 lie on the Extracellular side of the membrane; that stretch reads TTDYKGNRLRICLLHPTQKTAFMQFYKT. Residues 273–297 form a helical membrane-spanning segment; the sequence is AKDWWLFSFYFCLPLAITAFFYTLM. Residues 298 to 325 are Cytoplasmic-facing; that stretch reads TCEMLRKKSGMQIALNDHLKQRREVAKT. Ser-306 carries the phosphoserine modification. The helical transmembrane segment at 326–351 threads the bilayer; it reads VFCLVLVFALCWLPLHLSRILKLTLY. The Extracellular segment spans residues 352-363; it reads DQNDSNRCELLS. A glycan (N-linked (GlcNAc...) asparagine) is linked at Asn-354. The helical transmembrane segment at 364–390 threads the bilayer; sequence FLLVLDYIGINMASLNSCINPIALYLV. Residues 391-443 are Cytoplasmic-facing; it reads SKRFKNCFKSCLCCWCQSFEEKQSLEEKQSCLKFKANDHGYDNFRSSNKYSSS. 3 S-palmitoyl cysteine lipidation sites follow: Cys-403, Cys-404, and Cys-406. Residue Ser-420 is modified to Phosphoserine. Phosphotyrosine is present on Tyr-440. Ser-441, Ser-442, and Ser-443 each carry phosphoserine.

It belongs to the G-protein coupled receptor 1 family. Endothelin receptor subfamily. EDNRB sub-subfamily.

It localises to the cell membrane. In terms of biological role, non-specific receptor for endothelin 1, 2, and 3. Mediates its action by association with G proteins that activate a phosphatidylinositol-calcium second messenger system. The chain is Endothelin receptor type B (EDNRB) from Sus scrofa (Pig).